The following is a 234-amino-acid chain: N-acetyl-alpha-D-glucosaminyl L-malate deacetylase 1 (234 aa).

3 residues coordinate Zn(2+): H12, D15, and H113.

It belongs to the PIGL family. In terms of assembly, homohexamer. Trimer of dimers. Requires Zn(2+) as cofactor.

The catalysed reaction is (S)-malyl N-acetyl-alpha-D-glucosaminide + H2O = (S)-malyl alpha-D-glucosaminide + acetate. Involved in bacillithiol (BSH) biosynthesis. Catalyzes the second step of the pathway, the deacetylation of N-acetylglucosaminylmalate (GlcNAc-Mal) to glucosamine malate (GlcN-Mal). This is N-acetyl-alpha-D-glucosaminyl L-malate deacetylase 1 from Bacillus cereus (strain ATCC 14579 / DSM 31 / CCUG 7414 / JCM 2152 / NBRC 15305 / NCIMB 9373 / NCTC 2599 / NRRL B-3711).